Consider the following 546-residue polypeptide: CTP synthase (546 aa).

Residues 1–266 (MTTRYIFVTG…DDLVVKRFGL (266 aa)) are amidoligase domain. CTP is bound at residue serine 14. Serine 14 serves as a coordination point for UTP. Residues 15-20 (SLGKGI) and aspartate 72 each bind ATP. Mg(2+)-binding residues include aspartate 72 and glutamate 140. CTP contacts are provided by residues 147–149 (DIE), 187–192 (KTKPTQ), and lysine 223. UTP contacts are provided by residues 187 to 192 (KTKPTQ) and lysine 223. An ATP-binding site is contributed by 239 to 241 (KDV). In terms of domain architecture, Glutamine amidotransferase type-1 spans 291 to 542 (VIGMVGKYIE…VAAASAHQKR (252 aa)). Residue glycine 352 participates in L-glutamine binding. Catalysis depends on cysteine 379, which acts as the Nucleophile; for glutamine hydrolysis. Residues 380–383 (LGMQ), glutamate 403, and arginine 470 each bind L-glutamine. Catalysis depends on residues histidine 515 and glutamate 517.

This sequence belongs to the CTP synthase family. Homotetramer.

The enzyme catalyses UTP + L-glutamine + ATP + H2O = CTP + L-glutamate + ADP + phosphate + 2 H(+). It catalyses the reaction L-glutamine + H2O = L-glutamate + NH4(+). The catalysed reaction is UTP + NH4(+) + ATP = CTP + ADP + phosphate + 2 H(+). It functions in the pathway pyrimidine metabolism; CTP biosynthesis via de novo pathway; CTP from UDP: step 2/2. Its activity is regulated as follows. Allosterically activated by GTP, when glutamine is the substrate; GTP has no effect on the reaction when ammonia is the substrate. The allosteric effector GTP functions by stabilizing the protein conformation that binds the tetrahedral intermediate(s) formed during glutamine hydrolysis. Inhibited by the product CTP, via allosteric rather than competitive inhibition. Its function is as follows. Catalyzes the ATP-dependent amination of UTP to CTP with either L-glutamine or ammonia as the source of nitrogen. Regulates intracellular CTP levels through interactions with the four ribonucleotide triphosphates. The chain is CTP synthase from Shewanella sp. (strain MR-4).